The primary structure comprises 200 residues: GTP cyclohydrolase-2 (200 aa).

GTP is bound at residue 50–54; sequence RVHSE. Zn(2+) contacts are provided by Cys55, Cys66, and Cys68. GTP is bound by residues Gln71, 93-95, and Thr115; that span reads EGR. Asp127 functions as the Proton acceptor in the catalytic mechanism. Arg129 serves as the catalytic Nucleophile. GTP is bound by residues Thr150 and Lys155.

Belongs to the GTP cyclohydrolase II family. Zn(2+) serves as cofactor.

It carries out the reaction GTP + 4 H2O = 2,5-diamino-6-hydroxy-4-(5-phosphoribosylamino)-pyrimidine + formate + 2 phosphate + 3 H(+). It functions in the pathway cofactor biosynthesis; riboflavin biosynthesis; 5-amino-6-(D-ribitylamino)uracil from GTP: step 1/4. In terms of biological role, catalyzes the conversion of GTP to 2,5-diamino-6-ribosylamino-4(3H)-pyrimidinone 5'-phosphate (DARP), formate and pyrophosphate. In Acinetobacter baumannii (strain SDF), this protein is GTP cyclohydrolase-2.